Consider the following 512-residue polypeptide: ATP synthase subunit alpha, chloroplastic (512 aa).

170-177 (GDRQTGKT) serves as a coordination point for ATP.

This sequence belongs to the ATPase alpha/beta chains family. As to quaternary structure, F-type ATPases have 2 components, CF(1) - the catalytic core - and CF(0) - the membrane proton channel. CF(1) has five subunits: alpha(3), beta(3), gamma(1), delta(1), epsilon(1). CF(0) has four main subunits: a, b, b' and c.

It is found in the plastid. It localises to the chloroplast thylakoid membrane. The catalysed reaction is ATP + H2O + 4 H(+)(in) = ADP + phosphate + 5 H(+)(out). Produces ATP from ADP in the presence of a proton gradient across the membrane. The alpha chain is a regulatory subunit. This chain is ATP synthase subunit alpha, chloroplastic, found in Chaetosphaeridium globosum (Charophycean green alga).